We begin with the raw amino-acid sequence, 162 residues long: Regulator of sigma D (162 aa).

It belongs to the Rsd/AlgQ family. In terms of assembly, interacts with RpoD.

The protein resides in the cytoplasm. Its function is as follows. Binds RpoD and negatively regulates RpoD-mediated transcription activation by preventing the interaction between the primary sigma factor RpoD with the catalytic core of the RNA polymerase and with promoter DNA. May be involved in replacement of the RNA polymerase sigma subunit from RpoD to RpoS during the transition from exponential growth to the stationary phase. The protein is Regulator of sigma D of Salmonella typhi.